Reading from the N-terminus, the 364-residue chain is MQVRLNERQQQVLWATVRHYIATAEPVGSKALAEEYNLKVSAATIRNIMGALEQGGLLYQPHTSAGRVPSDSGYRIYVDYLMTPANDLSRRVEQLLSDRLNPTSISLEAVLRGAAQILATLSGYITLITLPQTLTATIRWLQLVRVETSRVMLIVVTDNYETRSALMELGDTADTEESRIERELEVLTNFLNHQLRGRSLTELANLDWQQLDREFQRHGDTLRTLLQDLLQRSQPVGSNQILISGLSEVLQQPEFSQLQQVQTILHLLEDEQDQLWPLICEWSVATDAAPITLPSQQRVRILIGSENPLEPMRMCTLVSSTYQRGSVPIGSVGVLGPTRMPYDKVIPLVEATADYLSDTLGQPA.

It belongs to the HrcA family.

Its function is as follows. Negative regulator of class I heat shock genes (grpE-dnaK-dnaJ and groELS operons). Prevents heat-shock induction of these operons. The polypeptide is Heat-inducible transcription repressor HrcA (Cyanothece sp. (strain PCC 7425 / ATCC 29141)).